A 255-amino-acid chain; its full sequence is Pimeloyl-[acyl-carrier protein] methyl ester esterase (255 aa).

Substrate contacts are provided by residues Trp-18, 78–79 (SL), and 139–143 (FLALD). The Nucleophile role is filled by Ser-78. Catalysis depends on residues Asp-203 and His-233. His-233 contributes to the substrate binding site.

It belongs to the AB hydrolase superfamily. Carboxylesterase BioH family. In terms of assembly, monomer.

The protein localises to the cytoplasm. The catalysed reaction is 6-carboxyhexanoyl-[ACP] methyl ester + H2O = 6-carboxyhexanoyl-[ACP] + methanol + H(+). It participates in cofactor biosynthesis; biotin biosynthesis. The physiological role of BioH is to remove the methyl group introduced by BioC when the pimeloyl moiety is complete. It allows to synthesize pimeloyl-ACP via the fatty acid synthetic pathway through the hydrolysis of the ester bonds of pimeloyl-ACP esters. The chain is Pimeloyl-[acyl-carrier protein] methyl ester esterase from Xylella fastidiosa (strain M12).